We begin with the raw amino-acid sequence, 386 residues long: 5-hydroxytryptamine receptor 1B (386 aa).

The interval 1-25 (MEEPGARCAPPPPAGSQTQTPSSNL) is disordered. Residues 1–42 (MEEPGARCAPPPPAGSQTQTPSSNLSHNCSADSYIYQDSIAL) are Extracellular-facing. Residues 16–25 (SQTQTPSSNL) show a composition bias toward polar residues. Asn-24 and Asn-28 each carry an N-linked (GlcNAc...) asparagine glycan. Residues 43–68 (PWKVLLVALLALITLATTLSNAFVIA) traverse the membrane as a helical segment. Residues 69-82 (TVYRTRKLHTPANY) are Cytoplasmic-facing. The chain crosses the membrane as a helical span at residues 83 to 107 (LIASLAVTDLLVSILVMPISTMYTV). Over 108-115 (TGRWTLGQ) the chain is Extracellular. Residues 116 to 141 (VVCDFWLSSDITCCTASIMHLCVIAL) traverse the membrane as a helical segment. Cys-118 and Cys-195 are oxidised to a cystine. Asp-125 and Thr-130 together coordinate ergotamine. The DRY motif; important for ligand-induced conformation changes and signaling signature appears at 142 to 144 (DRY). At 142–161 (DRYWAITDAVEYSAKRTPRR) the chain is on the cytoplasmic side. A helical membrane pass occupies residues 162-180 (AAVMIALVWVFSISISLPR). The Extracellular portion of the chain corresponds to 181–201 (FFWRQAKAEEEVLDCLVNTDH). Ergotamine is bound at residue Val-197. Residues 202–225 (VLYTVYSTVGAFYLPTLLLIALYG) form a helical membrane-spanning segment. The Cytoplasmic segment spans residues 226-311 (RIYVEARSRI…AARERKATKT (86 aa)). A disordered region spans residues 253-272 (ISDSPGSTSSVTSINSRVPD). Positions 254 to 268 (SDSPGSTSSVTSINS) are enriched in low complexity. Residues 312-333 (LGIILGAFIVCWLPFFIISLVM) traverse the membrane as a helical segment. Residues 334–343 (PICKDACWFH) are Extracellular-facing. The chain crosses the membrane as a helical span at residues 344 to 366 (MAIFDFFNWLGYLNSLINPIIYT). The NPxxY motif; important for ligand-induced conformation changes and signaling motif lies at 361-365 (NPIIY). The Cytoplasmic segment spans residues 367–386 (MPNEDFKQAFHKLIRFKCTG). Cys-384 is lipidated: S-palmitoyl cysteine.

The protein belongs to the G-protein coupled receptor 1 family. Homodimer. Heterodimer with HTR1D. Post-translationally, phosphorylated. Desensitization of the receptor may be mediated by its phosphorylation. Palmitoylated.

Its subcellular location is the cell membrane. G-protein coupled receptor for 5-hydroxytryptamine (serotonin). Also functions as a receptor for ergot alkaloid derivatives, various anxiolytic and antidepressant drugs and other psychoactive substances, such as lysergic acid diethylamide (LSD). Ligand binding causes a conformation change that triggers signaling via guanine nucleotide-binding proteins (G proteins) and modulates the activity of downstream effectors, such as adenylate cyclase. HTR1B is coupled to G(i)/G(o) G alpha proteins and mediates inhibitory neurotransmission by inhibiting adenylate cyclase activity. Arrestin family members inhibit signaling via G proteins and mediate activation of alternative signaling pathways. Regulates the release of 5-hydroxytryptamine, dopamine and acetylcholine in the brain, and thereby affects neural activity, nociceptive processing, pain perception, mood and behavior. Besides, plays a role in vasoconstriction of cerebral arteries. This is 5-hydroxytryptamine receptor 1B (HTR1B) from Spalax ehrenbergi (Middle East blind mole rat).